Reading from the N-terminus, the 193-residue chain is Adenine phosphoribosyltransferase (193 aa).

This sequence belongs to the purine/pyrimidine phosphoribosyltransferase family. Homodimer.

The protein localises to the cytoplasm. The catalysed reaction is AMP + diphosphate = 5-phospho-alpha-D-ribose 1-diphosphate + adenine. It participates in purine metabolism; AMP biosynthesis via salvage pathway; AMP from adenine: step 1/1. In terms of biological role, catalyzes a salvage reaction resulting in the formation of AMP, that is energically less costly than de novo synthesis. The chain is Adenine phosphoribosyltransferase from Bifidobacterium longum (strain NCC 2705).